The chain runs to 431 residues: O-phosphoseryl-tRNA(Sec) selenium transferase (431 aa).

The segment at 1-36 is tetramerization; the sequence is MRGLIPDHMLERGRTVLDSYREPVERLLSERRMPEE. A pyridoxal 5'-phosphate-binding site is contributed by arginine 67. A phosphate loop (P-loop) region spans residues 88–98; that stretch reads GRSGTLVDPQP. Arginine 89, serine 90, and glutamine 97 together coordinate substrate. Lysine 269 is modified (N6-(pyridoxal phosphate)lysine). Arginine 298 is a substrate binding site.

The protein belongs to the SepSecS family. As to quaternary structure, homotetramer. The cofactor is pyridoxal 5'-phosphate.

It catalyses the reaction O-phospho-L-seryl-tRNA(Sec) + selenophosphate + H2O = L-selenocysteinyl-tRNA(Sec) + 2 phosphate. Its pathway is aminoacyl-tRNA biosynthesis; selenocysteinyl-tRNA(Sec) biosynthesis; selenocysteinyl-tRNA(Sec) from L-seryl-tRNA(Sec) (archaeal/eukaryal route): step 2/2. Its function is as follows. Converts O-phosphoseryl-tRNA(Sec) to selenocysteinyl-tRNA(Sec) required for selenoprotein biosynthesis. This Methanopyrus kandleri (strain AV19 / DSM 6324 / JCM 9639 / NBRC 100938) protein is O-phosphoseryl-tRNA(Sec) selenium transferase (spcS).